The following is a 448-amino-acid chain: Phosphoglucosamine mutase (448 aa).

The active-site Phosphoserine intermediate is the Ser102. Residues Ser102, Asp241, Asp243, and Asp245 each coordinate Mg(2+). Ser102 carries the phosphoserine modification.

This sequence belongs to the phosphohexose mutase family. Requires Mg(2+) as cofactor. In terms of processing, activated by phosphorylation.

It carries out the reaction alpha-D-glucosamine 1-phosphate = D-glucosamine 6-phosphate. Its function is as follows. Catalyzes the conversion of glucosamine-6-phosphate to glucosamine-1-phosphate. The protein is Phosphoglucosamine mutase of Ruegeria pomeroyi (strain ATCC 700808 / DSM 15171 / DSS-3) (Silicibacter pomeroyi).